The following is a 386-amino-acid chain: S-adenosylmethionine synthase (386 aa).

ATP is bound at residue H16. Residue D18 participates in Mg(2+) binding. K(+) is bound at residue E44. Residues E57 and Q100 each coordinate L-methionine. The segment at 100–110 is flexible loop; that stretch reads QSRDITQGVDR. ATP contacts are provided by residues 165–167, D240, 246–247, A263, and K267; these read DAK and RK. Residue D240 coordinates L-methionine. K271 is an L-methionine binding site.

Belongs to the AdoMet synthase family. As to quaternary structure, homotetramer; dimer of dimers. Mg(2+) serves as cofactor. It depends on K(+) as a cofactor.

The protein resides in the cytoplasm. It carries out the reaction L-methionine + ATP + H2O = S-adenosyl-L-methionine + phosphate + diphosphate. Its pathway is amino-acid biosynthesis; S-adenosyl-L-methionine biosynthesis; S-adenosyl-L-methionine from L-methionine: step 1/1. Its function is as follows. Catalyzes the formation of S-adenosylmethionine (AdoMet) from methionine and ATP. The overall synthetic reaction is composed of two sequential steps, AdoMet formation and the subsequent tripolyphosphate hydrolysis which occurs prior to release of AdoMet from the enzyme. The protein is S-adenosylmethionine synthase of Francisella tularensis subsp. tularensis (strain FSC 198).